Reading from the N-terminus, the 847-residue chain is KN motif and ankyrin repeat domain-containing protein 2 (847 aa).

The interval methionine 1–tyrosine 32 is disordered. The segment at methionine 1 to serine 72 is interaction with AIFM1. 5 positions are modified to phosphoserine: serine 19, serine 83, serine 86, serine 89, and serine 92. Arginine 105 is modified (omega-N-methylarginine). Residues leucine 161–proline 182 form a disordered region. Residue threonine 170 is modified to Phosphothreonine. Coiled-coil stretches lie at residues leucine 187–glutamine 207 and glutamate 284–glutamine 311. Threonine 331 is subject to Phosphothreonine. A Phosphoserine modification is found at serine 358. Disordered regions lie at residues glycine 414–serine 473 and asparagine 502–glutamate 581. Residues aspartate 420 to proline 433 show a composition bias toward pro residues. Low complexity-rich tracts occupy residues tyrosine 434–alanine 446 and glutamate 506–glutamate 516. The residue at position 536 (serine 536) is a Phosphoserine. One copy of the ANK 0; degenerate repeat lies at arginine 610–methionine 647. 5 ANK repeats span residues asparagine 662 to lysine 692, alanine 696 to alanine 729, alanine 734 to methionine 763, aspartate 767 to leucine 797, and aspartate 801 to phenylalanine 831. The tract at residues threonine 665–phenylalanine 831 is interaction with NCOA1.

Interacts (non-phosphorylated form) with NCOA1; NCOA2 AND NCOA3. Interacts with AIFM1. Interacts with ARHGDIA; the interaction is direct and may regulate the interaction of ARHGDIA with RHOA, RAC1 and CDC42. Interacts (via ANK repeats 1-5) with KIF21A. Post-translationally, phosphorylated by casein kinase II upon estrogen stimulation. Phosphorylation induces the release by KANK2 of NCOA1 and its translocation to the nucleus where NCOA1 can activate gene transcription. Expressed by podocytes in kidney glomeruli (at protein level).

Its subcellular location is the cytoplasm. It localises to the mitochondrion. Involved in transcription regulation by sequestering in the cytoplasm nuclear receptor coactivators such as NCOA1, NCOA2 and NCOA3. Involved in regulation of caspase-independent apoptosis by sequestering the proapoptotic factor AIFM1 in mitochondria. Pro-apoptotic stimuli can induce its proteasomal degradation allowing the translocation of AIFM1 to the nucleus to induce apoptosis. Involved in the negative control of vitamin D receptor signaling pathway. Involved in actin stress fibers formation through its interaction with ARHGDIA and the regulation of the Rho signaling pathway. May thereby play a role in cell adhesion and migration, regulating for instance podocytes migration during development of the kidney. Through the Rho signaling pathway may also regulate cell proliferation. This chain is KN motif and ankyrin repeat domain-containing protein 2, found in Rattus norvegicus (Rat).